A 491-amino-acid polypeptide reads, in one-letter code: Adenylosuccinate synthetase, chloroplastic (491 aa).

Residues 78-84 and 106-108 each bind GTP; these read GDEGKGK and GHT. The active-site Proton acceptor is the aspartate 79. Residues aspartate 79 and glycine 106 each contribute to the Mg(2+) site. Residues 79-82, 104-107, threonine 196, arginine 210, glutamine 290, threonine 305, and arginine 369 each bind IMP; these read DEGK and NAGH. Histidine 107 functions as the Proton donor in the catalytic mechanism. 365–371 serves as a coordination point for substrate; the sequence is TTTGRPR. Residues arginine 371, 397 to 399, and 480 to 482 contribute to the GTP site; these read KLD and GIG.

This sequence belongs to the adenylosuccinate synthetase family. In terms of assembly, homodimer. The cofactor is Mg(2+).

The protein localises to the plastid. It localises to the chloroplast. It catalyses the reaction IMP + L-aspartate + GTP = N(6)-(1,2-dicarboxyethyl)-AMP + GDP + phosphate + 2 H(+). Its pathway is purine metabolism; AMP biosynthesis via de novo pathway; AMP from IMP: step 1/2. Its function is as follows. Plays an important role in the de novo pathway and in the salvage pathway of purine nucleotide biosynthesis. Catalyzes the first committed step in the biosynthesis of AMP from IMP. This Populus trichocarpa (Western balsam poplar) protein is Adenylosuccinate synthetase, chloroplastic.